Consider the following 487-residue polypeptide: uncharacterized protein (487 aa).

Disordered stretches follow at residues 35 to 153 (VSRK…SGDQ), 237 to 345 (NTTK…AKAL), and 358 to 395 (QKRKREEIVRKKEERRHAPVSEKKEVPTTVSTNTSSAA). The segment covering 54-96 (FDQEDILDTVPEQTDENEDEAGDDELESEKEELDYDEEEDDED) has biased composition (acidic residues). Basic and acidic residues predominate over residues 97-132 (RRERTSRYTSEKKGSRKDSVEGDENKKENGQDETKR). Residues 241 to 253 (SKSRGRDTRKRRS) show a composition bias toward basic residues. The span at 254 to 264 (SSYSSTSSSSD) shows a compositional bias: low complexity. Composition is skewed to basic and acidic residues over residues 273-338 (SRSD…KHSA) and 358-383 (QKRKREEIVRKKEERRHAPVSEKKEV). Low complexity predominate over residues 385 to 395 (TTVSTNTSSAA).

This is an uncharacterized protein from Caenorhabditis elegans.